A 472-amino-acid chain; its full sequence is Aspartyl/glutamyl-tRNA(Asn/Gln) amidotransferase subunit B (472 aa).

This sequence belongs to the GatB/GatE family. GatB subfamily. In terms of assembly, heterotrimer of A, B and C subunits.

It catalyses the reaction L-glutamyl-tRNA(Gln) + L-glutamine + ATP + H2O = L-glutaminyl-tRNA(Gln) + L-glutamate + ADP + phosphate + H(+). The catalysed reaction is L-aspartyl-tRNA(Asn) + L-glutamine + ATP + H2O = L-asparaginyl-tRNA(Asn) + L-glutamate + ADP + phosphate + 2 H(+). In terms of biological role, allows the formation of correctly charged Asn-tRNA(Asn) or Gln-tRNA(Gln) through the transamidation of misacylated Asp-tRNA(Asn) or Glu-tRNA(Gln) in organisms which lack either or both of asparaginyl-tRNA or glutaminyl-tRNA synthetases. The reaction takes place in the presence of glutamine and ATP through an activated phospho-Asp-tRNA(Asn) or phospho-Glu-tRNA(Gln). This Campylobacter jejuni subsp. jejuni serotype O:2 (strain ATCC 700819 / NCTC 11168) protein is Aspartyl/glutamyl-tRNA(Asn/Gln) amidotransferase subunit B.